Reading from the N-terminus, the 465-residue chain is Cysteine--tRNA ligase (465 aa).

Zn(2+) is bound at residue Cys-27. The short motif at Pro-29–Asn-39 is the 'HIGH' region element. Zn(2+) contacts are provided by Cys-207, His-232, and Glu-236. Residues Lys-264–Ser-268 carry the 'KMSKS' region motif. Lys-267 contributes to the ATP binding site.

It belongs to the class-I aminoacyl-tRNA synthetase family. In terms of assembly, monomer. The cofactor is Zn(2+).

The protein localises to the cytoplasm. The catalysed reaction is tRNA(Cys) + L-cysteine + ATP = L-cysteinyl-tRNA(Cys) + AMP + diphosphate. The protein is Cysteine--tRNA ligase of Carboxydothermus hydrogenoformans (strain ATCC BAA-161 / DSM 6008 / Z-2901).